We begin with the raw amino-acid sequence, 138 residues long: HTH-type transcriptional regulator CymR (138 aa).

An HTH rrf2-type domain is found at Lys2–Ser125. Positions Leu28–Asn51 form a DNA-binding region, H-T-H motif.

Homodimer. Forms homotetramers at higher concentrations of protein. Forms CymR(2):CysK(2) or CymR(4):CysK(4) complexes in the absence of O-acetylserine.

Functionally, master repressor of cysteine metabolism in B.subtilis. Controls the expression of genes involved either in cysteine synthesis from sulfide (cysK), sulfonates (ssu), or methionine (mccAB) or in cystine uptake (tcyP). Activity of CymR is positively regulated by CysK in response to cysteine availability. When cysteine is present, the pool of O-acetylserine (OAS) is low, which leads to the formation of a CymR-CysK complex and transcriptional repression of the CymR regulon occurs. In the absence of cysteine, the OAS pool is high and the CymR-CysK complex is mostly dissociated, leading to a faster dissociation of CymR from its DNA targets and the lifting of CymR-dependent repression. The sequence is that of HTH-type transcriptional regulator CymR (cymR) from Bacillus subtilis (strain 168).